Consider the following 167-residue polypeptide: uncharacterized protein (167 aa).

A compositionally biased stretch (basic and acidic residues) spans 1–13 (MQGDIRRKKDLLP). 2 disordered regions span residues 1–26 (MQGD…SRRR) and 67–167 (ESHS…ILDN). Over residues 71-80 (SDVSASASDH) the composition is skewed to low complexity. A compositionally biased stretch (basic and acidic residues) spans 102–156 (VPKEKFNNEVAKQQEVKNLENDLKPQIDSEKQKQINKDKKEQKQQLQKEKQDLAK).

This is an uncharacterized protein from Saccharomyces cerevisiae (strain ATCC 204508 / S288c) (Baker's yeast).